Here is a 366-residue protein sequence, read N- to C-terminus: GTP cyclohydrolase 1 type 2 homolog (366 aa).

Residues histidine 64, histidine 65, aspartate 102, histidine 326, and glutamate 329 each contribute to the Zn(2+) site.

This sequence belongs to the GTP cyclohydrolase I type 2/NIF3 family. As to quaternary structure, homohexamer.

In Staphylococcus aureus (strain MRSA252), this protein is GTP cyclohydrolase 1 type 2 homolog.